Here is a 242-residue protein sequence, read N- to C-terminus: Orotidine 5'-phosphate decarboxylase (242 aa).

Substrate is bound by residues Asp21, Lys43, 71 to 80 (DLKFFDVPET), Thr124, Arg185, Gln195, Gly215, and Arg216. Lys73 acts as the Proton donor in catalysis.

This sequence belongs to the OMP decarboxylase family. Type 1 subfamily. Homodimer.

The enzyme catalyses orotidine 5'-phosphate + H(+) = UMP + CO2. The protein operates within pyrimidine metabolism; UMP biosynthesis via de novo pathway; UMP from orotate: step 2/2. Its function is as follows. Catalyzes the decarboxylation of orotidine 5'-monophosphate (OMP) to uridine 5'-monophosphate (UMP). The protein is Orotidine 5'-phosphate decarboxylase of Methylococcus capsulatus (strain ATCC 33009 / NCIMB 11132 / Bath).